Here is an 854-residue protein sequence, read N- to C-terminus: Putative Tricorn-like protease C-terminal subunit (854 aa).

His539 acts as the Charge relay system in catalysis. Residues 554-646 (PIGGLGADYE…RVTVKLLKDE (93 aa)) are PDZ-like. A substrate-binding site is contributed by Gly709. Ser756 (nucleophile) is an active-site residue. Glu814 serves as the catalytic Charge relay system.

It belongs to the peptidase S41B family.

Its subcellular location is the cytoplasm. Its function is as follows. Degrades oligopeptides in a sequential manner. The protein is Putative Tricorn-like protease C-terminal subunit (triC) of Sulfurisphaera tokodaii (strain DSM 16993 / JCM 10545 / NBRC 100140 / 7) (Sulfolobus tokodaii).